The sequence spans 88 residues: MANIKSSEKDIRRTKRRNAANSQNRSRLRTQAKKVLKAIKEKDQKAAMTLFIEYTSLLDKAAKTNLIHSKNADRKKSRMAKRLNSSAA.

A compositionally biased stretch (basic and acidic residues) spans 1 to 11 (MANIKSSEKDI). Disordered stretches follow at residues 1–31 (MANIKSSEKDIRRTKRRNAANSQNRSRLRTQ) and 69–88 (SKNADRKKSRMAKRLNSSAA).

Belongs to the bacterial ribosomal protein bS20 family.

Binds directly to 16S ribosomal RNA. The chain is Small ribosomal subunit protein bS20 from Leptospira interrogans serogroup Icterohaemorrhagiae serovar copenhageni (strain Fiocruz L1-130).